We begin with the raw amino-acid sequence, 385 residues long: Cell division protein FtsZ (385 aa).

Residues 37 to 41 (GGGSN), 125 to 127 (GTG), E156, K160, and D204 contribute to the GTP site.

The protein belongs to the FtsZ family. In terms of assembly, homodimer. Polymerizes to form a dynamic ring structure in a strictly GTP-dependent manner. Interacts directly with several other division proteins.

The protein localises to the cytoplasm. Essential cell division protein that forms a contractile ring structure (Z ring) at the future cell division site. The regulation of the ring assembly controls the timing and the location of cell division. One of the functions of the FtsZ ring is to recruit other cell division proteins to the septum to produce a new cell wall between the dividing cells. Binds GTP and shows GTPase activity. This chain is Cell division protein FtsZ, found in Helicobacter pylori (strain J99 / ATCC 700824) (Campylobacter pylori J99).